Reading from the N-terminus, the 1307-residue chain is Histone-lysine N-methyltransferase SETDB1 (1307 aa).

Residues 30-65 adopt a coiled-coil conformation; that stretch reads VEELGISMEELRQYIDEELEKMDCIQQRKKQLAELE. Residues Ser-112 and Ser-117 each carry the phosphoserine modification. A Phosphothreonine modification is found at Thr-120. The segment at 127–148 is disordered; sequence DEDDDVLSIDSGDAGSRTPKDQ. Lys-182 participates in a covalent cross-link: Glycyl lysine isopeptide (Lys-Gly) (interchain with G-Cter in SUMO2); alternate. A Glycyl lysine isopeptide (Lys-Gly) (interchain with G-Cter in ubiquitin); alternate cross-link involves residue Lys-182. Tudor domains are found at residues 257 to 320 and 347 to 403; these read KLFV…LKKT and LLKS…SMKT. Disordered stretches follow at residues 404 to 424, 444 to 512, and 531 to 570; these read SSAS…PNMG, IQFK…TLSE, and SVTS…AFHG. The segment covering 454–467 has biased composition (pro residues); that stretch reads PIAPPAPLPIPPLS. Over residues 476–494 the composition is skewed to polar residues; the sequence is ESQLAQSRKQVAKKSTSFR. Positions 495 to 512 are enriched in low complexity; that stretch reads PGSVGSGHSSPTSSTLSE. Residues 539–565 show a composition bias toward pro residues; that stretch reads AAPPVPPVPPGPPTPPGPPAPPGPLAP. The 72-residue stretch at 611–682 folds into the MBD domain; it reads YRGKNPLLVP…EMFCLDPYVL (72 aa). The Pre-SET domain occupies 744 to 817; sequence VGCDCKDGCR…MCTNRLVQHG (74 aa). Residues Cys-746, Cys-748, Cys-752, Cys-758, Cys-760, Cys-798, Cys-802, Cys-804, and Cys-809 each contribute to the Zn(2+) site. Residues 820–1282 form the SET domain; that stretch reads VRLQLFKTQN…AGTELTWDYN (463 aa). S-adenosyl-L-methionine is bound by residues 830–832, Asp-868, and Tyr-870; that span reads KGW. Lys-884 participates in a covalent cross-link: Glycyl lysine isopeptide (Lys-Gly) (interchain with G-Cter in ubiquitin). Residues 885-1174 form a disordered region; it reads EGYESDVPTS…KNLSGPTKRQ (290 aa). A compositionally biased stretch (acidic residues) spans 913–924; sequence EDPEESNDDSSD. Basic and acidic residues predominate over residues 950 to 966; the sequence is GQKENELSEMTSKDSRP. Ser-1042 is subject to Phosphoserine. Residues 1048 to 1066 are compositionally biased toward basic and acidic residues; it reads FKDEGDNKQPKKEDPENRN. Residue Lys-1049 forms a Glycyl lysine isopeptide (Lys-Gly) (interchain with G-Cter in SUMO2); alternate linkage. A Glycyl lysine isopeptide (Lys-Gly) (interchain with G-Cter in SUMO1); alternate cross-link involves residue Lys-1049. Glycyl lysine isopeptide (Lys-Gly) (interchain with G-Cter in SUMO2) cross-links involve residues Lys-1055 and Lys-1085. Over residues 1097–1112 the composition is skewed to polar residues; it reads SVLQSQRVVTSTQSNP. Over residues 1116–1131 the composition is skewed to low complexity; it reads LTLSSSTESEGESGTS. Residues 1137–1156 are compositionally biased toward polar residues; sequence GHTSATAVDSDDIQTISSGS. A Glycyl lysine isopeptide (Lys-Gly) (interchain with G-Cter in SUMO2) cross-link involves residue Lys-1165. N6,N6,N6-trimethyllysine; alternate occurs at positions 1186 and 1194. N6,N6-dimethyllysine; alternate occurs at positions 1186 and 1194. S-adenosyl-L-methionine contacts are provided by residues Arg-1236 and 1239–1240; that span reads NH. The Zn(2+) site is built by Cys-1242, Cys-1295, Cys-1297, and Cys-1302. Residues 1291-1307 enclose the Post-SET domain; that stretch reads KELLCCCGAIECRGRLL.

Belongs to the class V-like SAM-binding methyltransferase superfamily. Histone-lysine methyltransferase family. Suvar3-9 subfamily. In terms of assembly, part of a complex containing at least CDYL, REST, WIZ, SETDB1, EHMT1 and EHMT2. Forms a complex with ATRX, TRIM28 and ZNF274. Probably part of a corepressor complex containing ZNF304, TRIM28, SETDB1 and DNMT1. Interacts with TRIM28/TIF1B. Interacts with ATF7IP and ATF7IP2; the interaction with ATF7IP is required to stimulate histone methyltransferase activity and facilitate the conversion of dimethylated to trimethylated H3 'Lys-9'. Interacts with MBD1; interaction is abolished when MBD1 is sumoylated. Interacts with CBX1 and CBX5. Interacts with DNMT3A and DNMT3B. Interacts with SUMO2. Interacts with MPHOSPH8. Interacts with ERG. Interacts with HDAC1, HDAC2, SIN3A, SIN3B. Interacts with ATRX. Interacts with RESF1. Interacts with ZNF638. Interacts with TASOR. Interacts with ZNF263; recruited to the SIX3 promoter along with other proteins involved in chromatin modification and transcriptional corepression where it contributes to transcriptional repression. Interacts with PHF13; the interaction probably enhances SETDB1 chromatin-associated levels and activity. Interacts with VRK1. In terms of processing, degraded by the proteasome, shielded by interaction with ATF7IP. Monoubiquitinated at Lys-884 by E2 enzymes UBE2E family. The conjugated-Ub is protected from deubiquitination through the SET domain. Monoubiquitination at Lys-884 is required for catalytic activity and H3K9 methylation and endogenous retrovirus silencing. In terms of tissue distribution, ubiquitously expressed. Strong expression in liver and testis. Expressed in the brain, lungs, kidneys, uterus and seminal vesicles.

It is found in the nucleus. Its subcellular location is the chromosome. It catalyses the reaction N(6),N(6)-dimethyl-L-lysyl(9)-[histone H3] + S-adenosyl-L-methionine = N(6),N(6),N(6)-trimethyl-L-lysyl(9)-[histone H3] + S-adenosyl-L-homocysteine + H(+). Histone methyltransferase that specifically trimethylates 'Lys-9' of histone H3. H3 'Lys-9' trimethylation represents a specific tag for epigenetic transcriptional repression by recruiting HP1 (CBX1, CBX3 and/or CBX5) proteins to methylated histones. Mainly functions in euchromatin regions, thereby playing a central role in the silencing of euchromatic genes. H3 'Lys-9' trimethylation is coordinated with DNA methylation. Probably forms a complex with MBD1 and ATF7IP that represses transcription and couples DNA methylation and histone 'Lys-9' trimethylation. Its activity is dependent on MBD1 and is heritably maintained through DNA replication by being recruited by CAF-1. SETDB1 is targeted to histone H3 by TRIM28/TIF1B, a factor recruited by KRAB zinc-finger proteins. Probably forms a corepressor complex required for activated KRAS-mediated promoter hypermethylation and transcriptional silencing of tumor suppressor genes (TSGs) or other tumor-related genes in colorectal cancer (CRC) cells. Required to maintain a transcriptionally repressive state of genes in undifferentiated embryonic stem cells (ESCs). In ESCs, in collaboration with TRIM28, is also required for H3K9me3 and silencing of endogenous and introduced retroviruses in a DNA-methylation independent-pathway. Associates at promoter regions of tumor suppressor genes (TSGs) leading to their gene silencing. The SETDB1-TRIM28-ZNF274 complex may play a role in recruiting ATRX to the 3'-exons of zinc-finger coding genes with atypical chromatin signatures to establish or maintain/protect H3K9me3 at these transcriptionally active regions. The chain is Histone-lysine N-methyltransferase SETDB1 from Mus musculus (Mouse).